The primary structure comprises 82 residues: ATP synthase subunit c, chloroplastic (82 aa).

Helical transmembrane passes span 3–23 (PLIC…GAIG) and 57–77 (LAFM…LMFA).

Belongs to the ATPase C chain family. F-type ATPases have 2 components, F(1) - the catalytic core - and F(0) - the membrane proton channel. F(1) has five subunits: alpha(3), beta(3), gamma(1), delta(1), epsilon(1). F(0) has four main subunits: a(1), b(1), b'(1) and c(10-14). The alpha and beta chains form an alternating ring which encloses part of the gamma chain. F(1) is attached to F(0) by a central stalk formed by the gamma and epsilon chains, while a peripheral stalk is formed by the delta, b and b' chains.

Its subcellular location is the plastid. It is found in the chloroplast thylakoid membrane. Its function is as follows. F(1)F(0) ATP synthase produces ATP from ADP in the presence of a proton or sodium gradient. F-type ATPases consist of two structural domains, F(1) containing the extramembraneous catalytic core and F(0) containing the membrane proton channel, linked together by a central stalk and a peripheral stalk. During catalysis, ATP synthesis in the catalytic domain of F(1) is coupled via a rotary mechanism of the central stalk subunits to proton translocation. In terms of biological role, key component of the F(0) channel; it plays a direct role in translocation across the membrane. A homomeric c-ring of between 10-14 subunits forms the central stalk rotor element with the F(1) delta and epsilon subunits. The chain is ATP synthase subunit c, chloroplastic from Ostreococcus tauri.